The chain runs to 649 residues: Lipolysis-stimulated lipoprotein receptor (649 aa).

A compositionally biased stretch (gly residues) spans 1–16 (MQQDGLGVGTRNGSGK). The disordered stretch occupies residues 1–21 (MQQDGLGVGTRNGSGKGRSVH). Residues 1 to 259 (MQQDGLGVGT…PGFQAGPIED (259 aa)) lie on the Extracellular side of the membrane. The region spanning 86–234 (PARAIQVTVS…DLQGNNEAYA (149 aa)) is the Ig-like V-type domain. C111 and C218 are joined by a disulfide. Residues 260-280 (WLFVVVVCLAAFLIFLLLGIC) form a helical membrane-spanning segment. The Cytoplasmic portion of the chain corresponds to 281-649 (WCQCCPHTCC…LALSRESLVV (369 aa)). T336 is modified (phosphothreonine). Residues S365, S371, S389, S432, and S436 each carry the phosphoserine modification. Residues 414-649 (NFDPSRPGPP…LALSRESLVV (236 aa)) are disordered. Over residues 426-444 (RVERAMSEVTSLHEDDWRS) the composition is skewed to basic and acidic residues. T453 bears the Phosphothreonine mark. A phosphoserine mark is found at S464, S467, and S493. T501 carries the phosphothreonine modification. Positions 502-518 (PPSTAESGSRSPTSNGG) are enriched in polar residues. 2 positions are modified to phosphoserine: S528 and S530. Basic and acidic residues predominate over residues 529–565 (RSRDDLYDQDDSRDFPRSRDPHYDDFRSRERPPADPR). A Phosphotyrosine modification is found at Y535. Phosphoserine occurs at positions 540 and 579. Residues 589-609 (RLLEEAVRKKGSEERRRPHKE) are compositionally biased toward basic and acidic residues. At S631 the chain carries Phosphoserine. Residue K638 forms a Glycyl lysine isopeptide (Lys-Gly) (interchain with G-Cter in ubiquitin) linkage. Phosphoserine is present on residues S643 and S646.

Belongs to the immunoglobulin superfamily. LISCH7 family. As to quaternary structure, homotrimer or homotetramer. Assembles into cell-cell contacts. Interacts (via the cytoplasmic domain) with MARVELD2 (via C-terminal cytoplasmic domain); the interaction is required to recruit MARVELD2 to tricellular contacts. Interacts with OCLN. Post-translationally, phosphorylation at Ser-365 by MAPK8/JNK1 and MAPK9/JNK2 may be required for exclusive localization at tricellular tight junstions. In terms of processing, polyubiquitinated at Lys-638 via 'Lys-63'-linked ubiquitin chains; deubiquitinated by USP53.

The protein localises to the cell membrane. Its subcellular location is the cell junction. It is found in the tight junction. In terms of biological role, probable role in the clearance of triglyceride-rich lipoprotein from blood. Binds chylomicrons, LDL and VLDL in presence of free fatty acids and allows their subsequent uptake in the cells. Maintains epithelial barrier function by recruiting MARVELD2/tricellulin to tricellular tight junctions. The sequence is that of Lipolysis-stimulated lipoprotein receptor from Homo sapiens (Human).